The following is a 324-amino-acid chain: Phosphate transport system permease protein PstC (324 aa).

Helical transmembrane passes span 29 to 49 (LLLT…ALSM), 87 to 107 (IVTA…IAFF), 126 to 146 (LLAG…LVPV), 173 to 193 (PLGI…IPFI), 235 to 255 (VIGG…AVAF), and 291 to 311 (SALL…LVIA). The ABC transmembrane type-1 domain maps to 83–311 (IYGTIVTALI…IVTFAVLVIA (229 aa)).

Belongs to the binding-protein-dependent transport system permease family. CysTW subfamily.

Its subcellular location is the cell inner membrane. In terms of biological role, part of a binding-protein-dependent transport system for phosphate; probably responsible for the translocation of the substrate across the membrane. In Xylella fastidiosa (strain 9a5c), this protein is Phosphate transport system permease protein PstC (pstC).